A 358-amino-acid polypeptide reads, in one-letter code: tRNA-specific 2-thiouridylase MnmA (358 aa).

Residues 8–15 (GLSGGVDS) and leucine 34 contribute to the ATP site. Cysteine 95 acts as the Nucleophile in catalysis. A disulfide bridge connects residues cysteine 95 and cysteine 194. Glycine 120 lines the ATP pocket. The interval 144-146 (KDQ) is interaction with tRNA. The active-site Cysteine persulfide intermediate is cysteine 194. The interval 299–300 (RY) is interaction with tRNA.

It belongs to the MnmA/TRMU family.

Its subcellular location is the cytoplasm. The catalysed reaction is S-sulfanyl-L-cysteinyl-[protein] + uridine(34) in tRNA + AH2 + ATP = 2-thiouridine(34) in tRNA + L-cysteinyl-[protein] + A + AMP + diphosphate + H(+). In terms of biological role, catalyzes the 2-thiolation of uridine at the wobble position (U34) of tRNA, leading to the formation of s(2)U34. The chain is tRNA-specific 2-thiouridylase MnmA from Synechocystis sp. (strain ATCC 27184 / PCC 6803 / Kazusa).